Reading from the N-terminus, the 232-residue chain is Sugar fermentation stimulation protein homolog (232 aa).

This sequence belongs to the SfsA family.

The polypeptide is Sugar fermentation stimulation protein homolog (Pyrobaculum arsenaticum (strain DSM 13514 / JCM 11321 / PZ6)).